An 862-amino-acid polypeptide reads, in one-letter code: Short transient receptor potential channel 7 (862 aa).

The disordered stretch occupies residues 1–21 (MLGSNTFKNMQRRHTTLREKG). At 1 to 351 (MLGSNTFKNM…GLRQQSIAVK (351 aa)) the chain is on the cytoplasmic side. Residues 10–21 (MQRRHTTLREKG) are compositionally biased toward basic residues. T15 is modified (phosphothreonine; by PKG/PRKG1). ANK repeat units follow at residues 42 to 71 (PEEE…TLNF), 77 to 106 (MGQN…LARV), 108 to 134 (DALL…FAQG), and 163 to 192 (HDIT…RIER). A helical membrane pass occupies residues 352–372 (FLAVFGVSIGLPFLAIAYWIA). Over 373-383 (PCSKLGQTLRS) the chain is Extracellular. The helical transmembrane segment at 384–404 (PFMKFVAHAVSFTIFLGLLVV) threads the bilayer. Over 405-465 (NASDRFEGVK…KEIWEEGPRE (61 aa)) the chain is Cytoplasmic. The helical transmembrane segment at 466-486 (YVLHLWNLLDFGMLSIFVASF) threads the bilayer. Over 487-537 (TARFMAFLKASEAQLYVDQYVQDVTLHNVSLPPEVAYFTYARDKWWPSDPQ) the chain is Extracellular. N514 carries N-linked (GlcNAc...) asparagine glycosylation. A helical transmembrane segment spans residues 538–558 (IISEGLYAIAVVLSFSRIAYI). Over 559-581 (LPANESFGPLQISLGRTVKDIFK) the chain is Cytoplasmic. Residues 582–602 (FMVIFIMVFVAFMIGMFNLYS) form a helical membrane-spanning segment. The Extracellular segment spans residues 603–651 (YYRGAKYNPAFTTVEESFKTLFWSIFGLSEVISVVLKYDHKFIENIGYV). Residues 652–672 (LYGVYNVTMVVVLLNMLIAMI) traverse the membrane as a helical segment. The Cytoplasmic segment spans residues 673–862 (NNSYQEIEED…HLRVNQGKDI (190 aa)).

The protein belongs to the transient receptor (TC 1.A.4) family. STrpC subfamily. TRPC7 sub-subfamily. In terms of assembly, interacts with MX1 and RNF24. Interacts (via ANK-repeat domains) with PRKG1. In terms of processing, phosphorylation by PRKG1 at Thr-15 negatively regulates TRPC7 activity.

The protein localises to the cell membrane. The protein resides in the nucleus envelope. It catalyses the reaction Ca(2+)(in) = Ca(2+)(out). Forms a receptor-activated non-selective calcium permeant cation channel. Probably is operated by a phosphatidylinositol second messenger system activated by receptor tyrosine kinases or G-protein coupled receptors. Activated by diacylglycerol (DAG). May also be activated by intracellular calcium store depletion. The sequence is that of Short transient receptor potential channel 7 (Trpc7) from Mus musculus (Mouse).